A 312-amino-acid chain; its full sequence is Sulfate adenylyltransferase subunit 2 (312 aa).

Belongs to the PAPS reductase family. CysD subfamily. In terms of assembly, heterodimer composed of CysD, the smaller subunit, and CysN.

It catalyses the reaction sulfate + ATP + H(+) = adenosine 5'-phosphosulfate + diphosphate. Its pathway is sulfur metabolism; hydrogen sulfide biosynthesis; sulfite from sulfate: step 1/3. Its function is as follows. With CysN forms the ATP sulfurylase (ATPS) that catalyzes the adenylation of sulfate producing adenosine 5'-phosphosulfate (APS) and diphosphate, the first enzymatic step in sulfur assimilation pathway. APS synthesis involves the formation of a high-energy phosphoric-sulfuric acid anhydride bond driven by GTP hydrolysis by CysN coupled to ATP hydrolysis by CysD. The protein is Sulfate adenylyltransferase subunit 2 of Methylobacterium nodulans (strain LMG 21967 / CNCM I-2342 / ORS 2060).